Reading from the N-terminus, the 457-residue chain is MVAENNKNKDVTLSASMDNNNNNIKGTNIHLEVHQKEPALVKPESETRKGLYFLSNLDQNIAVIVRTIYCFKSEERGNEEAVQVIKKALSQVLVHYYPLAGRLTISPEGKLTVDCTEEGVVFVEAEANCKMDEIGDITKPDPETLGKLVYDVVDAKNILEIPPVTAQVTKFKCGGFVLGLCMNHCMFDGIGAMEFVNSWGQVARGLPLTTPPFSDRTILNARNPPKIENLHQEFEEIEDKSNINSLYTKEPTLYRSFCFDPEKIKKLKLQATENSESLLGNSCTSFEALSAFVWRARTKSLKMLSDQKTKLLFAVDGRAKFEPQLPKGYFGNGIVLTNSICEAGELIEKPLSFAVGLVREAIKMVTDGYMRSAIDYFEVTRARPSLSSTLLITTWSRLGFHTTDFGWGEPILSGPVALPEKEVTLFLSHGEQRRSINVLLGLPATAMDVFQEQFLQI.

Residues His-184 and Asp-404 each act as proton acceptor in the active site.

The protein belongs to the plant acyltransferase family. Expressed in roots, seedlings, leaves, stems, flowers and siliques. Detected at the protein level in roots and in seed coats.

It catalyses the reaction 16-hydroxyhexadecanoate + (E)-feruloyl-CoA = 16-feruloyloxyhexadecanoate + CoA. Involved in the synthesis of aromatics of the suberin polymer. Specifically affects the accumulation of the ferulate constituent of suberin in roots and seeds, but has no effect on the content of p-coumarate or sinapate. The polypeptide is Omega-hydroxypalmitate O-feruloyl transferase (HHT1) (Arabidopsis thaliana (Mouse-ear cress)).